The following is a 330-amino-acid chain: Homeobox protein Hox-C13 (330 aa).

Over residues 30–47 (GGGGGGGGGTGGAGGGCS) the composition is skewed to gly residues. The interval 30–50 (GGGGGGGGGTGGAGGGCSGAS) is disordered. Positions 260–319 (GRKKRVPYTKVQLKELEKEYAASKFITKEKRRRISATTNLSERQVTIWFQNRRVKEKKVV) form a DNA-binding region, homeobox.

This sequence belongs to the Abd-B homeobox family.

It is found in the nucleus. Functionally, transcription factor which plays a role in hair follicle differentiation. Regulates FOXQ1 expression and that of other hair-specific genes. The polypeptide is Homeobox protein Hox-C13 (HOXC13) (Homo sapiens (Human)).